We begin with the raw amino-acid sequence, 501 residues long: Phosphatidylinositol 4-kinase type 2-beta (501 aa).

2 disordered regions span residues 1 to 30 and 65 to 122; these read MMAECDPTDGEPGNGSGDSTPETNFLSSEV and TELE…NHFP. Polar residues predominate over residues 17 to 27; it reads GDSTPETNFLS. The segment covering 76 to 88 has biased composition (low complexity); it reads ALLLPGPAGSLSP. Residues 99–117 are compositionally biased toward polar residues; it reads NMLSSSSDNLASPGNSSGE. Residues 141-471 enclose the PI3K/PI4K catalytic domain; the sequence is GVFPERISQG…VQMPRVVVER (331 aa). The tract at residues 147-153 is G-loop; it reads ISQGSSG. Positions 154 and 169 each coordinate ATP. The segment at 174 to 176 is important for substrate binding; the sequence is EPY. The interval 182 to 195 is important for interaction with membranes; the sequence is KWTKYFHKVCCPCC. ATP contacts are provided by residues 278–281 and 292–293; these read QLFV and RK. The interval 285 to 293 is important for interaction with membranes; the sequence is HEADFWLRK. Residues 322–330 are catalytic loop; that stretch reads RNTDRGNDN. Residues 362–382 are activation loop; sequence AIDNGLAFPFKHPDEWRAYPF. ATP is bound at residue Asp364. An important for interaction with membranes region spans residues 377 to 386; that stretch reads WRAYPFHWAW.

Belongs to the PI3/PI4-kinase family. Type II PI4K subfamily.

The protein localises to the cytoplasm. Its subcellular location is the cytosol. It localises to the golgi apparatus membrane. It is found in the endoplasmic reticulum membrane. The protein resides in the cell membrane. The protein localises to the early endosome membrane. The catalysed reaction is a 1,2-diacyl-sn-glycero-3-phospho-(1D-myo-inositol) + ATP = a 1,2-diacyl-sn-glycero-3-phospho-(1D-myo-inositol 4-phosphate) + ADP + H(+). Functionally, contributes to the overall PI4-kinase activity of the cell. This contribution may be especially significant in plasma membrane, endosomal and Golgi compartments. The phosphorylation of phosphatidylinositol (PI) to PI4P is the first committed step in the generation of phosphatidylinositol 4,5-bisphosphate (PIP2), a precursor of the second messenger inositol 1,4,5-trisphosphate (InsP3). This Danio rerio (Zebrafish) protein is Phosphatidylinositol 4-kinase type 2-beta (pi4k2b).